Reading from the N-terminus, the 307-residue chain is Regulating synaptic membrane exocytosis protein 3 (307 aa).

Residues 86–120 (STETGIAVEMRSRVTRQGSRESTDGSTNSNSSEGT) form a disordered region. The span at 109–119 (DGSTNSNSSEG) shows a compositional bias: polar residues. The C2 domain maps to 155–273 (PMGDVHIAIM…DLSAAVTGWY (119 aa)). 2 positions are modified to phosphoserine: Ser294 and Ser297.

Binds PPFIA3. Does not bind RAB3.

Its subcellular location is the synapse. Its function is as follows. Regulates synaptic membrane exocytosis. The protein is Regulating synaptic membrane exocytosis protein 3 (Rims3) of Mus musculus (Mouse).